A 199-amino-acid chain; its full sequence is Holliday junction branch migration complex subunit RuvA (199 aa).

The tract at residues 1–65 (MIGWLHGQII…EDALLLYGFL (65 aa)) is domain I. The interval 66–144 (DKEERSLFRS…QFDGSVSDTF (79 aa)) is domain II. Residues 144-148 (FQKQA) form a flexible linker region. The interval 149 to 199 (GSTHSQQEAISALEALGYKPQEAWKVMNKIDNGNKSCEQLIREALQILSSR) is domain III.

Belongs to the RuvA family. As to quaternary structure, homotetramer. Forms an RuvA(8)-RuvB(12)-Holliday junction (HJ) complex. HJ DNA is sandwiched between 2 RuvA tetramers; dsDNA enters through RuvA and exits via RuvB. An RuvB hexamer assembles on each DNA strand where it exits the tetramer. Each RuvB hexamer is contacted by two RuvA subunits (via domain III) on 2 adjacent RuvB subunits; this complex drives branch migration. In the full resolvosome a probable DNA-RuvA(4)-RuvB(12)-RuvC(2) complex forms which resolves the HJ.

It localises to the cytoplasm. Functionally, the RuvA-RuvB-RuvC complex processes Holliday junction (HJ) DNA during genetic recombination and DNA repair, while the RuvA-RuvB complex plays an important role in the rescue of blocked DNA replication forks via replication fork reversal (RFR). RuvA specifically binds to HJ cruciform DNA, conferring on it an open structure. The RuvB hexamer acts as an ATP-dependent pump, pulling dsDNA into and through the RuvAB complex. HJ branch migration allows RuvC to scan DNA until it finds its consensus sequence, where it cleaves and resolves the cruciform DNA. This is Holliday junction branch migration complex subunit RuvA from Legionella pneumophila subsp. pneumophila (strain Philadelphia 1 / ATCC 33152 / DSM 7513).